The following is a 369-amino-acid chain: S-adenosylmethionine decarboxylase proenzyme 2 (369 aa).

Residues Glu-9 and Glu-12 contribute to the active site. Ser-69 functions as the Schiff-base intermediate with substrate; via pyruvic acid in the catalytic mechanism. The residue at position 69 (Ser-69) is a Pyruvic acid (Ser); by autocatalysis. The active-site Proton donor; for catalytic activity is Cys-83. Active-site proton acceptor; for processing activity residues include Ser-236 and His-249.

The protein belongs to the eukaryotic AdoMetDC family. It depends on pyruvate as a cofactor. In terms of processing, is synthesized initially as an inactive proenzyme. Formation of the active enzyme involves a self-maturation process in which the active site pyruvoyl group is generated from an internal serine residue via an autocatalytic post-translational modification. Two non-identical subunits are generated from the proenzyme in this reaction, and the pyruvate is formed at the N-terminus of the alpha chain, which is derived from the carboxyl end of the proenzyme. The post-translation cleavage follows an unusual pathway, termed non-hydrolytic serinolysis, in which the side chain hydroxyl group of the serine supplies its oxygen atom to form the C-terminus of the beta chain, while the remainder of the serine residue undergoes an oxidative deamination to produce ammonia and the pyruvoyl group blocking the N-terminus of the alpha chain.

The enzyme catalyses S-adenosyl-L-methionine + H(+) = S-adenosyl 3-(methylsulfanyl)propylamine + CO2. It participates in amine and polyamine biosynthesis; S-adenosylmethioninamine biosynthesis; S-adenosylmethioninamine from S-adenosyl-L-methionine: step 1/1. This chain is S-adenosylmethionine decarboxylase proenzyme 2 (SAMDC2), found in Brassica juncea (Indian mustard).